The following is a 529-amino-acid chain: Transcription factor kayak (529 aa).

The span at Leu-118–Gln-134 shows a compositional bias: polar residues. 2 disordered regions span residues Leu-118–Gly-166 and Asn-180–Arg-239. Low complexity-rich tracts occupy residues Thr-142–Ser-153 and Gly-182–Arg-201. The 64-residue stretch at Glu-219–His-282 folds into the bZIP domain. The interval Lys-221–Arg-240 is basic motif. Positions Leu-247–Leu-275 are leucine-zipper. Disordered stretches follow at residues Ala-311–Thr-390 and Asp-493–Leu-529. Residues Asp-315 to Gly-332 are compositionally biased toward low complexity. The segment covering Ser-340 to Pro-350 has biased composition (polar residues). Position 349 is a phosphoserine (Ser-349). The segment covering Asp-363 to Asp-375 has biased composition (low complexity). The span at Gly-376–Pro-387 shows a compositional bias: pro residues.

It belongs to the bZIP family. Fos subfamily. In terms of assembly, homodimer. Heterodimer with Jra. The kay-Jra heterodimer binds more stably to the AP-1 site than either of the two proteins alone.

The protein localises to the nucleus. Functionally, developmentally regulated transcription factor AP-1 binds and recognizes the enhancer DNA sequence: 5'-TGA[CG]TCA-3'. May play a role in the function or determination of a particular subset of cells in the developing embryo. Is able to carry out its function either independently of or in conjunction with Jra. This is Transcription factor kayak from Drosophila ananassae (Fruit fly).